The following is a 449-amino-acid chain: MGLCASSEKNGSTPDTQTASAGSDNVGKAKVPPKQEPQKTVRTVNTANQQEKQQQRQQQPSPHNVKDRKEQNGSINNAISPTATANTSGSQQINIDSALRDRSSNVAAQPSLSDASSGSNDKELKVLLLGAGESGKSTVLQQLKILHQNGFSEQEIKEYIPLIYQNLLEIGRNLIQARTRFNVNLEPECELTQQDLSRTMSYEMPNNYTGQFPEDIAGVISTLWALPSTQDLVNGPNASKFYLMDSTPYFMENFTRITSPNYRPTQQDILRSRQMTSGIFDTVIDMGSDIKMHIYDVGGQRSERKKWIHCFDNVTLVIFCVSLSEYDQTLMEDKNQNRFQESLVLFDNIVNSRWFARTSVVLFLNKIDLFAEKLSKVPMENYFPDYTGGSDINKAAKYILWRFVQLNRANLSIYPHVTQATDTSNIRLVFAAIKETILENTLKDSGVLQ.

A disordered region spans residues 1–91 (MGLCASSEKN…TATANTSGSQ (91 aa)). G2 carries N-myristoyl glycine lipidation. C4 carries S-palmitoyl cysteine lipidation. Polar residues-rich tracts occupy residues 7-23 (SEKN…SAGS) and 38-48 (QKTVRTVNTAN). Residues 49 to 59 (QQEKQQQRQQQ) are compositionally biased toward low complexity. Positions 72–91 (NGSINNAISPTATANTSGSQ) are enriched in polar residues. The G-alpha domain occupies 122-448 (KELKVLLLGA…ENTLKDSGVL (327 aa)). A G1 motif region spans residues 125–138 (KVLLLGAGESGKST). Residues E133, S134, G135, K136, S137, T138, D245, L270, T276, G299, N365, K366, D368, and A420 each contribute to the GTP site. S137 contributes to the Mg(2+) binding site. The interval 268–276 (DILRSRQMT) is G2 motif. T276 provides a ligand contact to Mg(2+). The tract at residues 292-301 (MHIYDVGGQR) is G3 motif. Positions 361 to 368 (VLFLNKID) are G4 motif. The segment at 418-423 (TQATDT) is G5 motif.

This sequence belongs to the G-alpha family. G(q) subfamily. As to quaternary structure, g proteins are composed of 3 units; alpha, beta and gamma. The alpha chain contains the guanine nucleotide binding site. GPA2 interacts with the kelch repeat beta-mimic proteins GPB1 and GPB2 and with the gamma subunit GPG1. Interacts with the G protein coupled receptor GPR1. Also interacts with regulators of G protein signaling (RGS) protein RGS2. It depends on Mg(2+) as a cofactor. Post-translationally, myristoylation at Gly-2 and palmitoylation at Cys-4 are required for membrane localization and function of the protein.

It is found in the cell membrane. With respect to regulation, alternates between an inactive form bound to GDP and an active form bound to GTP. Activated by the G protein coupled receptor (GPCR) GPR1, which serves as a guanine nucleotide-exchange factor (GEF), and inactivated by RGS2, acting as a GTPase-activating protein (GAP) for GPA2. Its function is as follows. Alpha subunit of the heterotrimeric guanine nucleotide-binding protein (G protein) involved in glucose-induced cAMP signaling. Binds to its cognate transmembrane receptor GPR1, which senses extracellular carbon sources, and activates cAMP-PKA signaling and governs diploid pseudohyphal differentiation and haploid invasive growth. The G protein beta-mimic proteins GPB1 and GPB2 inhibit GPA2-GPR1 coupling, probably to reduce signaling in the absence of glucose. The chain is Guanine nucleotide-binding protein alpha-2 subunit (GPA2) from Saccharomyces cerevisiae (strain ATCC 204508 / S288c) (Baker's yeast).